A 273-amino-acid chain; its full sequence is Light-independent protochlorophyllide reductase iron-sulfur ATP-binding protein (273 aa).

ATP-binding positions include G12–T17 and K41. S16 serves as a coordination point for Mg(2+). [4Fe-4S] cluster is bound by residues C97 and C131. ATP is bound at residue N182 to R183.

The protein belongs to the NifH/BchL/ChlL family. In terms of assembly, homodimer. Protochlorophyllide reductase is composed of three subunits; BchL, BchN and BchB. [4Fe-4S] cluster is required as a cofactor.

It carries out the reaction chlorophyllide a + oxidized 2[4Fe-4S]-[ferredoxin] + 2 ADP + 2 phosphate = protochlorophyllide a + reduced 2[4Fe-4S]-[ferredoxin] + 2 ATP + 2 H2O. Its pathway is porphyrin-containing compound metabolism; bacteriochlorophyll biosynthesis (light-independent). Component of the dark-operative protochlorophyllide reductase (DPOR) that uses Mg-ATP and reduced ferredoxin to reduce ring D of protochlorophyllide (Pchlide) to form chlorophyllide a (Chlide). This reaction is light-independent. The L component serves as a unique electron donor to the NB-component of the complex, and binds Mg-ATP. This chain is Light-independent protochlorophyllide reductase iron-sulfur ATP-binding protein, found in Roseiflexus sp. (strain RS-1).